Here is a 205-residue protein sequence, read N- to C-terminus: Proteasome subunit beta type-3 (205 aa).

Ser2 carries the N-acetylserine modification. An N6-acetyllysine modification is found at Lys77.

Belongs to the peptidase T1B family. In terms of assembly, the 26S proteasome consists of a 20S proteasome core and two 19S regulatory subunits. The 20S proteasome core is a barrel-shaped complex made of 28 subunits that are arranged in four stacked rings. The two outer rings are each formed by seven alpha subunits, and the two inner rings are formed by seven beta subunits. The proteolytic activity is exerted by three beta-subunits PSMB5, PSMB6 and PSMB7. As to quaternary structure, (Microbial infection) Interacts with HIV-1 TAT protein.

The protein localises to the cytoplasm. The protein resides in the nucleus. Its function is as follows. Non-catalytic component of the 20S core proteasome complex involved in the proteolytic degradation of most intracellular proteins. This complex plays numerous essential roles within the cell by associating with different regulatory particles. Associated with two 19S regulatory particles, forms the 26S proteasome and thus participates in the ATP-dependent degradation of ubiquitinated proteins. The 26S proteasome plays a key role in the maintenance of protein homeostasis by removing misfolded or damaged proteins that could impair cellular functions, and by removing proteins whose functions are no longer required. Associated with the PA200 or PA28, the 20S proteasome mediates ubiquitin-independent protein degradation. This type of proteolysis is required in several pathways including spermatogenesis (20S-PA200 complex) or generation of a subset of MHC class I-presented antigenic peptides (20S-PA28 complex). This Homo sapiens (Human) protein is Proteasome subunit beta type-3.